The following is a 207-amino-acid chain: Ribosomal RNA small subunit methyltransferase G (207 aa).

Residues G74, L79, 125–126, and R140 each bind S-adenosyl-L-methionine; that span reads VE.

This sequence belongs to the methyltransferase superfamily. RNA methyltransferase RsmG family.

It is found in the cytoplasm. It catalyses the reaction guanosine(527) in 16S rRNA + S-adenosyl-L-methionine = N(7)-methylguanosine(527) in 16S rRNA + S-adenosyl-L-homocysteine. Specifically methylates the N7 position of guanine in position 527 of 16S rRNA. This chain is Ribosomal RNA small subunit methyltransferase G, found in Shewanella loihica (strain ATCC BAA-1088 / PV-4).